Reading from the N-terminus, the 306-residue chain is Methionyl-tRNA formyltransferase (306 aa).

(6S)-5,6,7,8-tetrahydrofolate is bound at residue 110–113; the sequence is SLLP.

It belongs to the Fmt family.

It catalyses the reaction L-methionyl-tRNA(fMet) + (6R)-10-formyltetrahydrofolate = N-formyl-L-methionyl-tRNA(fMet) + (6S)-5,6,7,8-tetrahydrofolate + H(+). In terms of biological role, attaches a formyl group to the free amino group of methionyl-tRNA(fMet). The formyl group appears to play a dual role in the initiator identity of N-formylmethionyl-tRNA by promoting its recognition by IF2 and preventing the misappropriation of this tRNA by the elongation apparatus. The chain is Methionyl-tRNA formyltransferase from Brucella abortus (strain S19).